The following is a 94-amino-acid chain: Lipolysis-activating peptide 1-beta chain (94 aa).

Residues 1–19 (MKILAVVLISVIVLNTANG) form the signal peptide. The LCN-type CS-alpha/beta domain maps to 20–87 (ENYYPQKYTN…FFNALESQCP (68 aa)). Cystine bridges form between cysteine 34-cysteine 56, cysteine 42-cysteine 66, and cysteine 46-cysteine 68.

This sequence belongs to the long (3 C-C) scorpion toxin superfamily. In terms of assembly, homodimer; disulfide-linked or monomer (edited version) or heterodimer of an alpha chain (AC D9U299 or AC D9U2A4) and this beta chain (non-edited version). Expressed by the venom gland.

The protein resides in the secreted. The homodimer inhibits HMG-CoA reductase (HMGCR) (32% of inhibition produced by 0.6 uM), a glycoprotein involved in the control of cholesterol biosynthesis. The inhibitory effects of bumarsin are seen at much lower concentrations (0.6 uM) than that for statins such as atorvastatin (5 mM) and simvastatin (10 uM). In addition to inhibition of HMG-CoA reductase, this protein lowers cholesterol levels by inducing steroid hormone synthesis via StAR, and by increasing reverse cholesterol transport mediated by the induction of ABCA1 and APOA1. Functionally, the heterodimer non-edited LVP1 induces lipolysis in rat adipocytes. Induction of lipolysis by LVP1 appears to be mediated through the beta-2 adrenergic receptor pathway (ADRB2). In terms of biological role, the monomer edited version, similar to alpha-toxins, may modulate voltage-gated sodium channels (Nav) and may block voltage-gated potassium channels (Kv). In Lychas mucronatus (Chinese swimming scorpion), this protein is Lipolysis-activating peptide 1-beta chain.